The following is a 333-amino-acid chain: Probable malate dehydrogenase 3 (333 aa).

12 to 18 (GAAGQIA) contributes to the NAD(+) binding site. Substrate-binding residues include arginine 93 and arginine 99. NAD(+)-binding positions include asparagine 106, glutamine 113, and 130–132 (VGN). 2 residues coordinate substrate: asparagine 132 and arginine 163. Catalysis depends on histidine 188, which acts as the Proton acceptor.

This sequence belongs to the LDH/MDH superfamily. MDH type 2 family. In terms of assembly, homodimer.

The catalysed reaction is (S)-malate + NAD(+) = oxaloacetate + NADH + H(+). Catalyzes the reversible oxidation of malate to oxaloacetate. The protein is Probable malate dehydrogenase 3 (mdhC) of Dictyostelium discoideum (Social amoeba).